The primary structure comprises 263 residues: HTH-type transcriptional repressor NanR (263 aa).

Positions 1-22 are disordered; it reads MGLMNAFDSQTEDSSPAIGRNL. The HTH gntR-type domain occupies 30–98; it reads KKLSEMVEEE…NGERARVSRP (69 aa). A DNA-binding region (H-T-H motif) is located at residues 58 to 77; the sequence is ERELMAFFNVGRPSVREALA.

Belongs to the NanR family.

Its function is as follows. Transcriptional repressor that controls expression of the genes required for the catabolism of sialic acids. This is HTH-type transcriptional repressor NanR from Shigella sonnei (strain Ss046).